The sequence spans 591 residues: V-type ATP synthase alpha chain (591 aa).

Position 232 to 239 (232 to 239 (GPFGAGKT)) interacts with ATP.

The protein belongs to the ATPase alpha/beta chains family.

It catalyses the reaction ATP + H2O + 4 H(+)(in) = ADP + phosphate + 5 H(+)(out). In terms of biological role, produces ATP from ADP in the presence of a proton gradient across the membrane. The V-type alpha chain is a catalytic subunit. The sequence is that of V-type ATP synthase alpha chain from Clostridium perfringens (strain ATCC 13124 / DSM 756 / JCM 1290 / NCIMB 6125 / NCTC 8237 / Type A).